The chain runs to 874 residues: Putative disease resistance protein At5g05400 (874 aa).

Positions 22–74 (LSRNQNRFRNLVDHVAALKKTVRQLEARRDDLLKRIKVQEDRGLNLLDEVQQW) form a coiled coil. Positions 139–434 (AQKGPIPKVE…GQGIILGSKG (296 aa)) constitute an NB-ARC domain. 182–189 (GMGGVGKT) is an ATP binding site. LRR repeat units lie at residues 483–505 (QKNVLVVEANAQLRDIPKIEDQK), 506–527 (AVRRMSLIYNQIEEACESLHCP), 528–548 (KLETLLLRDNRLRKISREFLS), 552–574 (ILMVLDLSLNPNLIELPSFSPLY), 575–597 (SLRFLNLSCTGITSLPDGLYALR), 598–620 (NLLYLNLEHTYMLKRIYEIHDLP), and 621–642 (NLEVLKLYASGIDITDKLVRQI).

Belongs to the disease resistance NB-LRR family.

In terms of biological role, potential disease resistance protein. The chain is Putative disease resistance protein At5g05400 from Arabidopsis thaliana (Mouse-ear cress).